The sequence spans 474 residues: tRNA-2-methylthio-N(6)-dimethylallyladenosine synthase (474 aa).

The MTTase N-terminal domain maps to 3–120 (KKLHIKTWGC…LPDMIDQVRR (118 aa)). The [4Fe-4S] cluster site is built by Cys12, Cys49, Cys83, Cys157, Cys161, and Cys164. Positions 143–375 (RAEGPTAFVS…QDRITQQAMR (233 aa)) constitute a Radical SAM core domain. Residues 378–441 (RHMMGTVQRI…TNSLRGKFIR (64 aa)) enclose the TRAM domain.

The protein belongs to the methylthiotransferase family. MiaB subfamily. Monomer. [4Fe-4S] cluster serves as cofactor.

The protein resides in the cytoplasm. It carries out the reaction N(6)-dimethylallyladenosine(37) in tRNA + (sulfur carrier)-SH + AH2 + 2 S-adenosyl-L-methionine = 2-methylsulfanyl-N(6)-dimethylallyladenosine(37) in tRNA + (sulfur carrier)-H + 5'-deoxyadenosine + L-methionine + A + S-adenosyl-L-homocysteine + 2 H(+). In terms of biological role, catalyzes the methylthiolation of N6-(dimethylallyl)adenosine (i(6)A), leading to the formation of 2-methylthio-N6-(dimethylallyl)adenosine (ms(2)i(6)A) at position 37 in tRNAs that read codons beginning with uridine. The sequence is that of tRNA-2-methylthio-N(6)-dimethylallyladenosine synthase from Shewanella sp. (strain ANA-3).